The primary structure comprises 540 residues: Homoserine O-acetyltransferase (540 aa).

The 339-residue stretch at 66-404 (NVILICHALT…QHGHDAFLLE (339 aa)) folds into the AB hydrolase-1 domain. Catalysis depends on Ser-171, which acts as the Nucleophile. Arg-240 lines the substrate pocket. A disordered region spans residues 262–284 (QDTDKSGIKGTTGTEGKNSSEIS). Catalysis depends on residues Asp-365 and His-398. Asp-399 provides a ligand contact to substrate. CBS domains follow at residues 425–484 (MNRN…ELDE) and 486–540 (ITRD…GKYD).

Belongs to the AB hydrolase superfamily. MetX family. In terms of assembly, homodimer.

Its subcellular location is the cytoplasm. The enzyme catalyses L-homoserine + acetyl-CoA = O-acetyl-L-homoserine + CoA. The protein operates within amino-acid biosynthesis; L-methionine biosynthesis via de novo pathway; O-acetyl-L-homoserine from L-homoserine: step 1/1. Transfers an acetyl group from acetyl-CoA to L-homoserine, forming acetyl-L-homoserine. In vitro, can also use propionyl-CoA or butiryl-CoA as acyl donor. In Methanosarcina acetivorans (strain ATCC 35395 / DSM 2834 / JCM 12185 / C2A), this protein is Homoserine O-acetyltransferase.